Reading from the N-terminus, the 96-residue chain is Transcription and mRNA export factor SUS1 (96 aa).

A Glycyl lysine isopeptide (Lys-Gly) (interchain with G-Cter in ubiquitin) cross-link involves residue Lys68.

It belongs to the ENY2 family. As to quaternary structure, component of the nuclear pore complex (NPC)-associated TREX-2 complex (transcription and export complex 2), composed of at least SUS1, SAC3, THP1, SEM1, and CDC31. TREX-2 contains 2 SUS1 chains. The TREX-2 complex interacts with the nucleoporin NUP1. Component of the 1.8 MDa SAGA transcription coactivator-HAT complex. SAGA is built of 5 distinct domains with specialized functions. Within the SAGA complex, SUS1, SGF11, SGF73 and UBP8 form an additional subcomplex of SAGA called the DUB module (deubiquitination module). Interacts directly with THP1, SAC3, SGF11, and with the RNA polymerase II.

The protein localises to the nucleus. Its subcellular location is the nucleoplasm. It localises to the cytoplasm. The protein resides in the P-body. In terms of biological role, involved in mRNA export coupled transcription activation by association with both the TREX-2 and the SAGA complexes. At the promoters, SAGA is required for recruitment of the basal transcription machinery. It influences RNA polymerase II transcriptional activity through different activities such as TBP interaction and promoter selectivity, interaction with transcription activators, and chromatin modification through histone acetylation and deubiquitination. Within the SAGA complex, participates in a subcomplex required for deubiquitination of H2B and for the maintenance of steady-state H3 methylation levels. The TREX-2 complex functions in docking export-competent ribonucleoprotein particles (mRNPs) to the nuclear entrance of the nuclear pore complex (nuclear basket). TREX-2 participates in mRNA export and accurate chromatin positioning in the nucleus by tethering genes to the nuclear periphery. May also be involved in cytoplasmic mRNA decay by interaction with components of P-bodies. This is Transcription and mRNA export factor SUS1 from Saccharomyces cerevisiae (strain RM11-1a) (Baker's yeast).